The primary structure comprises 263 residues: Probable methylthioribulose-1-phosphate dehydratase (263 aa).

Cysteine 102 is a binding site for substrate. Zn(2+) contacts are provided by histidine 120 and histidine 122. Residue glutamate 144 is the Proton donor/acceptor of the active site. Histidine 200 serves as a coordination point for Zn(2+).

The protein belongs to the aldolase class II family. MtnB subfamily. It depends on Zn(2+) as a cofactor.

The protein resides in the cytoplasm. It carries out the reaction 5-(methylsulfanyl)-D-ribulose 1-phosphate = 5-methylsulfanyl-2,3-dioxopentyl phosphate + H2O. It functions in the pathway amino-acid biosynthesis; L-methionine biosynthesis via salvage pathway; L-methionine from S-methyl-5-thio-alpha-D-ribose 1-phosphate: step 2/6. Catalyzes the dehydration of methylthioribulose-1-phosphate (MTRu-1-P) into 2,3-diketo-5-methylthiopentyl-1-phosphate (DK-MTP-1-P). This Caenorhabditis elegans protein is Probable methylthioribulose-1-phosphate dehydratase.